A 370-amino-acid polypeptide reads, in one-letter code: MHSESPIQRRPSRKIWVGPVAVGGDAPISVQSMTNTDTHDVEATVAQIRRLEAAGADIVRVSVPDMDAAEAFGRIKQQVQLPLVADIHFDYQIALRVAELGVDCLRINPGNIGREDRVRAVVDAARDRGIPIRIGVNAGSLEKDLQKKYGEPTPQALVESALRHVEHLDRLDFQNFKVSVKASDVFMAVAAYRLLAGQIEQPLHLGITEAGGLRSGTVKSAVGLGMLLAEGIGDTIRVSLAADPVEEIKVGFDILKSLHLRSRGINFIACPSCSRQNFDVVKTMNELETRLEDLLVPLDVAVIGCVVNGPGEAKEAHVGLTGGTPNNLVYIDGKPAQKLGNENLVDELERLIRRKAAEKAAADASLIVRS.

[4Fe-4S] cluster contacts are provided by Cys-270, Cys-273, Cys-305, and Glu-312.

It belongs to the IspG family. Requires [4Fe-4S] cluster as cofactor.

It carries out the reaction (2E)-4-hydroxy-3-methylbut-2-enyl diphosphate + oxidized [flavodoxin] + H2O + 2 H(+) = 2-C-methyl-D-erythritol 2,4-cyclic diphosphate + reduced [flavodoxin]. It participates in isoprenoid biosynthesis; isopentenyl diphosphate biosynthesis via DXP pathway; isopentenyl diphosphate from 1-deoxy-D-xylulose 5-phosphate: step 5/6. Functionally, converts 2C-methyl-D-erythritol 2,4-cyclodiphosphate (ME-2,4cPP) into 1-hydroxy-2-methyl-2-(E)-butenyl 4-diphosphate. The chain is 4-hydroxy-3-methylbut-2-en-1-yl diphosphate synthase (flavodoxin) from Azotobacter vinelandii (strain DJ / ATCC BAA-1303).